The primary structure comprises 371 residues: Neuropeptide S receptor (371 aa).

The Extracellular segment spans residues 1-52; sequence MPANFTEGSFDSNGTGQMLDSSPVACTETVTFTEVVEGKEWGSFYYSFKTEQ. Asn-4 and Asn-13 each carry an N-linked (GlcNAc...) asparagine glycan. The chain crosses the membrane as a helical span at residues 53-73; it reads LITLWVLFVFTIVGNSVVLFS. Residues 74–82 are Cytoplasmic-facing; that stretch reads TWRRKRKSR. Residues 83–103 form a helical membrane-spanning segment; sequence MTFFVTQLAITDSFTGLVNIL. Over 104-123 the chain is Extracellular; that stretch reads TDIIWRFTGDFMAPDLVCRV. Cys-121 and Cys-197 are disulfide-bonded. The chain crosses the membrane as a helical span at residues 124-144; it reads VRYLQVVLLYASTYVLVSLSI. Topologically, residues 145 to 164 are cytoplasmic; that stretch reads DRYHAIVYPMKFLQGEKQAK. The chain crosses the membrane as a helical span at residues 165–185; that stretch reads VLIVIAWSLSFLFSIPTLIIF. Residues 186–212 are Extracellular-facing; the sequence is GKRTLSNGEVQCWALWPDDSYWTPYMT. A helical transmembrane segment spans residues 213 to 233; that stretch reads IVAFLVYFIPLTIISVMYGIV. The Cytoplasmic segment spans residues 234–275; the sequence is IRTIWIKSKTYETVISNCSDGKLCSSYNRGLISKAKIKAIKY. Residues 276 to 296 traverse the membrane as a helical segment; that stretch reads SIVIILAFICCWSPYFLFDIL. Over 297–312 the chain is Extracellular; that stretch reads DNFNLLPDTQERFYAS. Residues 313-333 traverse the membrane as a helical segment; that stretch reads VIIQNLPALNSAINPLIYCVF. Residues 334 to 371 are Cytoplasmic-facing; sequence SSSISFPCGERRSQDSIMTFRERTERHEMQILSKPEFI.

It belongs to the G-protein coupled receptor 1 family. Vasopressin/oxytocin receptor subfamily.

The protein localises to the cell membrane. In terms of biological role, G-protein coupled receptor for neuropeptide S (NPS). Promotes mobilization of intracellular Ca(2+) stores. Inhibits cell growth in response to NPS binding. Involved in pathogenesis of asthma and other IgE-mediated diseases. The protein is Neuropeptide S receptor (NPSR1) of Macaca mulatta (Rhesus macaque).